Reading from the N-terminus, the 299-residue chain is MGKEEEIARIARRLDKMVTRKNAEGAMDLLRELKNMPITLHLLQSTRVGMSVNALRKQSSDEELIALAKSLIKSWKKLLDVSDGKSRDQGRGTPLPTSSSKDASGTTDLSCKKPDPPRTSSTPRITTFPQVPITCDAVRNKCREMLTLALQTDHDHVAVGVSCEHLSSQIEECIFLDVGNTDMKYKNRVRSRISNLKDAKNPGLRRNVLCGAITPQQIAVMTSEEMASDELKEIRKAMTKEAIREHQMARTGGTQTDLFTCNKCRKKNCTYTQVQTRSSDEPMTTYVVCNECGNRWKFC.

Residues 5–82 (EEIARIARRL…KSWKKLLDVS (78 aa)) enclose the TFIIS N-terminal domain. Residue lysine 57 forms a Glycyl lysine isopeptide (Lys-Gly) (interchain with G-Cter in ubiquitin) linkage. A phosphoserine mark is found at serine 59 and serine 100. The tract at residues 83 to 126 (DGKSRDQGRGTPLPTSSSKDASGTTDLSCKKPDPPRTSSTPRIT) is disordered. Residues 95 to 109 (LPTSSSKDASGTTDL) show a composition bias toward polar residues. A TFIIS central domain is found at 138–254 (VRNKCREMLT…EHQMARTGGT (117 aa)). Residues 257 to 297 (DLFTCNKCRKKNCTYTQVQTRSSDEPMTTYVVCNECGNRWK) form a TFIIS-type zinc finger. The Zn(2+) site is built by cysteine 261, cysteine 264, cysteine 289, and cysteine 292.

This sequence belongs to the TFS-II family. In terms of assembly, interacts with the basal transcription factor GTF2B. Interacts with REXO1. Testis specific.

Its subcellular location is the nucleus. Functionally, necessary for efficient RNA polymerase II transcription elongation past template-encoded arresting sites. The arresting sites in DNA have the property of trapping a certain fraction of elongating RNA polymerases that pass through, resulting in locked ternary complexes. Cleavage of the nascent transcript by S-II allows the resumption of elongation from the new 3'-terminus. This Rattus norvegicus (Rat) protein is Transcription elongation factor A protein 2 (Tcea2).